The following is a 172-amino-acid chain: MNLSKIKIGDIPNKINAVIEIPYGSNIKYEIDKDSGAIMVDRVMASAIFYPANYGFIANTLADDGDPVDILVLNEYPIQAGAVIPCRLIGVLIMEDESGMDEKLLAVPNSKIDARYDNIKTYTDLPQATLNKIKNFFETYKILEPNKWVKVQDFKDEKAAIEILEKAIKNYK.

The substrate site is built by Lys28, Arg42, and Tyr54. Mg(2+)-binding residues include Asp64, Asp69, and Asp101. Position 140 (Tyr140) interacts with substrate.

Belongs to the PPase family. Homohexamer. The cofactor is Mg(2+).

Its subcellular location is the cytoplasm. The catalysed reaction is diphosphate + H2O = 2 phosphate + H(+). Catalyzes the hydrolysis of inorganic pyrophosphate (PPi) forming two phosphate ions. The sequence is that of Inorganic pyrophosphatase from Campylobacter jejuni subsp. jejuni serotype O:2 (strain ATCC 700819 / NCTC 11168).